The primary structure comprises 31 residues: Dermaseptin-DI3 (31 aa).

Belongs to the frog skin active peptide (FSAP) family. Dermaseptin subfamily. Expressed by the skin glands.

It is found in the secreted. Antibacterial activity against Gram-positive bacteria S.aureus and E.faecalis, and Gram-negative bacteria P.aeruginosa and E.coli. The protein is Dermaseptin-DI3 of Phyllomedusa distincta (Monkey frog).